The chain runs to 356 residues: Tyrosine recombinase XerS (356 aa).

The 106-residue stretch at 16-121 folds into the Core-binding (CB) domain; it reads LMPWYVLEYY…ALSSLYKYLT (106 aa). In terms of domain architecture, Tyr recombinase spans 169–354; the sequence is GFLTYIDQEH…VNDEQKNALD (186 aa). Active-site residues include Arg210, Lys234, His306, Arg309, and His332. Tyr341 acts as the O-(3'-phospho-DNA)-tyrosine intermediate in catalysis.

The protein belongs to the 'phage' integrase family. XerS subfamily.

The protein resides in the cytoplasm. Its activity is regulated as follows. FtsK is required for recombination. Its function is as follows. Site-specific tyrosine recombinase, which acts by catalyzing the cutting and rejoining of the recombining DNA molecules. Essential to convert dimers of the bacterial chromosome into monomers to permit their segregation at cell division. This is Tyrosine recombinase XerS from Streptococcus pneumoniae (strain P1031).